A 251-amino-acid polypeptide reads, in one-letter code: Hydroxyacylglutathione hydrolase (251 aa).

The Zn(2+) site is built by histidine 53, histidine 55, aspartate 57, histidine 58, histidine 110, aspartate 127, and histidine 165.

The protein belongs to the metallo-beta-lactamase superfamily. Glyoxalase II family. In terms of assembly, monomer. It depends on Zn(2+) as a cofactor.

It catalyses the reaction an S-(2-hydroxyacyl)glutathione + H2O = a 2-hydroxy carboxylate + glutathione + H(+). The protein operates within secondary metabolite metabolism; methylglyoxal degradation; (R)-lactate from methylglyoxal: step 2/2. Thiolesterase that catalyzes the hydrolysis of S-D-lactoyl-glutathione to form glutathione and D-lactic acid. In Escherichia coli O17:K52:H18 (strain UMN026 / ExPEC), this protein is Hydroxyacylglutathione hydrolase.